We begin with the raw amino-acid sequence, 479 residues long: NADH-quinone oxidoreductase subunit N 2 (479 aa).

The next 14 membrane-spanning stretches (helical) occupy residues tryptophan 9 to valine 29, leucine 40 to alanine 60, arginine 75 to serine 95, tyrosine 110 to leucine 130, serine 131 to arginine 151, valine 164 to leucine 184, leucine 206 to phenylalanine 226, proline 238 to leucine 258, tryptophan 272 to valine 292, leucine 299 to glycine 319, valine 326 to methionine 346, alanine 371 to phenylalanine 391, glycine 404 to isoleucine 424, and alanine 449 to leucine 469.

Belongs to the complex I subunit 2 family. NDH-1 is composed of 14 different subunits. Subunits NuoA, H, J, K, L, M, N constitute the membrane sector of the complex.

Its subcellular location is the cell inner membrane. It carries out the reaction a quinone + NADH + 5 H(+)(in) = a quinol + NAD(+) + 4 H(+)(out). NDH-1 shuttles electrons from NADH, via FMN and iron-sulfur (Fe-S) centers, to quinones in the respiratory chain. The immediate electron acceptor for the enzyme in this species is believed to be ubiquinone. Couples the redox reaction to proton translocation (for every two electrons transferred, four hydrogen ions are translocated across the cytoplasmic membrane), and thus conserves the redox energy in a proton gradient. The protein is NADH-quinone oxidoreductase subunit N 2 of Rhizobium meliloti (strain 1021) (Ensifer meliloti).